The following is a 1468-amino-acid chain: DNA polymerase III PolC-type (1468 aa).

The interval 197 to 217 (QKSLEDSAPPSEEVTPTQNYD) is disordered. The Exonuclease domain occupies 430–586 (YVVFDVETTG…YDAEATGRLL (157 aa)).

This sequence belongs to the DNA polymerase type-C family. PolC subfamily.

It localises to the cytoplasm. It carries out the reaction DNA(n) + a 2'-deoxyribonucleoside 5'-triphosphate = DNA(n+1) + diphosphate. Required for replicative DNA synthesis. This DNA polymerase also exhibits 3' to 5' exonuclease activity. This chain is DNA polymerase III PolC-type, found in Streptococcus agalactiae serotype III (strain NEM316).